The following is a 434-amino-acid chain: Eukaryotic peptide chain release factor subunit 1-1 (434 aa).

Belongs to the eukaryotic release factor 1 family. As to quaternary structure, heterodimer of two subunits, one of which binds GTP.

Its subcellular location is the cytoplasm. Functionally, directs the termination of nascent peptide synthesis (translation) in response to the termination codons UAA, UAG and UGA. Modulates plant growth and development. This is Eukaryotic peptide chain release factor subunit 1-1 from Brassica oleracea var. botrytis (Cauliflower).